A 158-amino-acid chain; its full sequence is S-ribosylhomocysteine lyase (158 aa).

Fe cation-binding residues include His-54, His-58, and Cys-124.

This sequence belongs to the LuxS family. In terms of assembly, homodimer. It depends on Fe cation as a cofactor.

The catalysed reaction is S-(5-deoxy-D-ribos-5-yl)-L-homocysteine = (S)-4,5-dihydroxypentane-2,3-dione + L-homocysteine. Its function is as follows. Involved in the synthesis of autoinducer 2 (AI-2) which is secreted by bacteria and is used to communicate both the cell density and the metabolic potential of the environment. The regulation of gene expression in response to changes in cell density is called quorum sensing. Catalyzes the transformation of S-ribosylhomocysteine (RHC) to homocysteine (HC) and 4,5-dihydroxy-2,3-pentadione (DPD). The sequence is that of S-ribosylhomocysteine lyase from Limosilactobacillus reuteri (strain DSM 20016) (Lactobacillus reuteri).